A 94-amino-acid chain; its full sequence is Large ribosomal subunit protein uL22 (94 aa).

The protein belongs to the universal ribosomal protein uL22 family. In terms of assembly, part of the 50S ribosomal subunit.

This protein binds specifically to 23S rRNA; its binding is stimulated by other ribosomal proteins, e.g. L4, L17, and L20. It is important during the early stages of 50S assembly. It makes multiple contacts with different domains of the 23S rRNA in the assembled 50S subunit and ribosome. Its function is as follows. The globular domain of the protein is located near the polypeptide exit tunnel on the outside of the subunit, while an extended beta-hairpin is found that lines the wall of the exit tunnel in the center of the 70S ribosome. This Tomato big bud phytoplasma protein is Large ribosomal subunit protein uL22 (rplV).